Consider the following 258-residue polypeptide: Small ribosomal subunit protein uS2 (258 aa).

This sequence belongs to the universal ribosomal protein uS2 family.

In Granulibacter bethesdensis (strain ATCC BAA-1260 / CGDNIH1), this protein is Small ribosomal subunit protein uS2.